The following is a 162-amino-acid chain: Ribonuclease H (162 aa).

Residues 6 to 154 (DMKRVEIFTD…ADRLANQGVE (149 aa)) enclose the RNase H type-1 domain. Mg(2+) is bound by residues aspartate 15, glutamate 53, aspartate 82, and aspartate 146.

This sequence belongs to the RNase H family. Monomer. Mg(2+) is required as a cofactor.

It is found in the cytoplasm. It carries out the reaction Endonucleolytic cleavage to 5'-phosphomonoester.. Functionally, endonuclease that specifically degrades the RNA of RNA-DNA hybrids. The sequence is that of Ribonuclease H from Nitrosomonas eutropha (strain DSM 101675 / C91 / Nm57).